The chain runs to 421 residues: Ribosomal RNA large subunit methyltransferase G (421 aa).

Residues 389 to 421 form a disordered region; sequence EPELEQESDLNSKLDANTEVPHPQSALYGKPKA.

This sequence belongs to the methyltransferase superfamily. RlmG family.

It is found in the cytoplasm. It carries out the reaction guanosine(1835) in 23S rRNA + S-adenosyl-L-methionine = N(2)-methylguanosine(1835) in 23S rRNA + S-adenosyl-L-homocysteine + H(+). Its function is as follows. Specifically methylates the guanine in position 1835 (m2G1835) of 23S rRNA. The sequence is that of Ribosomal RNA large subunit methyltransferase G from Shewanella halifaxensis (strain HAW-EB4).